Reading from the N-terminus, the 445-residue chain is Protein PRRC1 (445 aa).

Disordered regions lie at residues 1–71 and 105–167; these read MMEE…PSAP and PPVS…TGLL. Residues 27 to 49 show a composition bias toward polar residues; the sequence is MSSTPVPLAATSSFSSPNVSSME. Pro residues predominate over residues 59–71; sequence PQPPLPPVRPSAP. Phosphoserine is present on residues serine 209 and serine 408.

Belongs to the PRRC1 family. In terms of assembly, interacts with PRKAR1A; resulting in PKA activation. As to expression, ubiquitously expressed with higher expression in kidney, liver and placenta. Detected in embryonic kidney cells (HEK293 cells) (at protein level). In terms of tissue distribution, specifically expressed in liver.

Its subcellular location is the golgi apparatus. The protein localises to the cytoplasm. May act as a regulator of the protein kinase A (PKA) activity during embryonic development. This is Protein PRRC1 (PRRC1) from Homo sapiens (Human).